Here is a 348-residue protein sequence, read N- to C-terminus: MVKRLSHLLVPLIAIILGLAAGALIMLVSGYSVASGYSALWNGIFGEIYYVGETIRQITPYILSGLAVAFAFRTGLFNIGVEGQLLVGWTAAVWVGTAFDGPAYIHLPLALITAAAAGGLWGFIPGILKARFYVHEVIVTIMMNYIALHMTNYIISNVLTDHQDKTGKIHESASLRSPFLEQITDYSRLHLGIIVALLAAVIMWFIINKSTKGFELRAVGFNQHASQYAGMSVRKNIMTSMLISGAFAGLAGAMEGLGTFEYAAVKGAFTGVGFDGIAVALLGGNTAVGVVLAACLLGGLKIGALNMPIESGVPSEVVDIVIAIIILFVASSYAIRFVMGKLKKKGAN.

9 helical membrane-spanning segments follow: residues 8–28 (LLVP…IMLV), 61–81 (YILS…NIGV), 85–105 (LLVG…PAYI), 107–127 (LPLA…IPGI), 136–156 (EVIV…YIIS), 189–209 (LHLG…IINK), 237–257 (IMTS…MEGL), 277–297 (IAVA…ACLL), and 320–340 (IVIA…FVMG).

The protein belongs to the binding-protein-dependent transport system permease family. The complex is composed of two ATP-binding proteins (NupO), two transmembrane proteins (NupP and NupQ) and a solute-binding protein (NupN).

The protein localises to the cell membrane. Part of an ABC transporter complex involved in the uptake of guanosine. Responsible for the translocation of the substrate across the membrane. May be a nucleoside transporter of broad specificity but with various affinities for different substrates. The chain is Guanosine ABC transporter permease protein NupP from Bacillus subtilis (strain 168).